Here is a 97-residue protein sequence, read N- to C-terminus: Co-chaperonin GroES (97 aa).

The protein belongs to the GroES chaperonin family. In terms of assembly, heptamer of 7 subunits arranged in a ring. Interacts with the chaperonin GroEL.

The protein localises to the cytoplasm. Its function is as follows. Together with the chaperonin GroEL, plays an essential role in assisting protein folding. The GroEL-GroES system forms a nano-cage that allows encapsulation of the non-native substrate proteins and provides a physical environment optimized to promote and accelerate protein folding. GroES binds to the apical surface of the GroEL ring, thereby capping the opening of the GroEL channel. The chain is Co-chaperonin GroES from Tolumonas auensis (strain DSM 9187 / NBRC 110442 / TA 4).